A 148-amino-acid chain; its full sequence is UPF0178 protein CA_C2825 (148 aa).

It belongs to the UPF0178 family.

The sequence is that of UPF0178 protein CA_C2825 from Clostridium acetobutylicum (strain ATCC 824 / DSM 792 / JCM 1419 / IAM 19013 / LMG 5710 / NBRC 13948 / NRRL B-527 / VKM B-1787 / 2291 / W).